A 341-amino-acid chain; its full sequence is Anthranilate phosphoribosyltransferase (341 aa).

Residues G84, 87–88, T92, 94–97, 112–120, and S124 contribute to the 5-phospho-alpha-D-ribose 1-diphosphate site; these read GD, NIST, and KHGNRSVSS. An anthranilate-binding site is contributed by G84. Mg(2+) is bound at residue S96. Anthranilate is bound at residue N115. An anthranilate-binding site is contributed by R170. D229 and E230 together coordinate Mg(2+).

Belongs to the anthranilate phosphoribosyltransferase family. In terms of assembly, homodimer. The cofactor is Mg(2+).

The enzyme catalyses N-(5-phospho-beta-D-ribosyl)anthranilate + diphosphate = 5-phospho-alpha-D-ribose 1-diphosphate + anthranilate. The protein operates within amino-acid biosynthesis; L-tryptophan biosynthesis; L-tryptophan from chorismate: step 2/5. Functionally, catalyzes the transfer of the phosphoribosyl group of 5-phosphorylribose-1-pyrophosphate (PRPP) to anthranilate to yield N-(5'-phosphoribosyl)-anthranilate (PRA). The sequence is that of Anthranilate phosphoribosyltransferase from Polynucleobacter asymbioticus (strain DSM 18221 / CIP 109841 / QLW-P1DMWA-1) (Polynucleobacter necessarius subsp. asymbioticus).